A 332-amino-acid polypeptide reads, in one-letter code: 2,3-diketo-L-gulonate reductase (332 aa).

The active-site Proton donor is His-44. NAD(+) contacts are provided by residues 168–174, 224–225, and 304–306; these read ITMVDMS, WK, and GHE.

The protein belongs to the LDH2/MDH2 oxidoreductase family. DlgD subfamily. Homodimer.

The protein resides in the cytoplasm. The enzyme catalyses 3-dehydro-L-gulonate + NAD(+) = 2,3-dioxo-L-gulonate + NADH + H(+). It catalyses the reaction 3-dehydro-L-gulonate + NADP(+) = 2,3-dioxo-L-gulonate + NADPH + H(+). In terms of biological role, catalyzes the reduction of 2,3-diketo-L-gulonate in the presence of NADH, to form 3-keto-L-gulonate. In Salmonella heidelberg (strain SL476), this protein is 2,3-diketo-L-gulonate reductase.